A 69-amino-acid chain; its full sequence is Cytochrome c oxidase subunit 8A, mitochondrial (69 aa).

The transit peptide at Met-1–Arg-25 directs the protein to the mitochondrion. Residues Ser-2 to Leu-19 carry the SIFI-degron motif. At Val-26–Gly-36 the chain is on the mitochondrial matrix side. A helical membrane pass occupies residues Thr-37–Ser-60. The Mitochondrial intermembrane portion of the chain corresponds to His-61–Glu-69.

This sequence belongs to the cytochrome c oxidase VIII family. Component of the cytochrome c oxidase (complex IV, CIV), a multisubunit enzyme composed of 14 subunits. The complex is composed of a catalytic core of 3 subunits MT-CO1, MT-CO2 and MT-CO3, encoded in the mitochondrial DNA, and 11 supernumerary subunits COX4I, COX5A, COX5B, COX6A, COX6B, COX6C, COX7A, COX7B, COX7C, COX8 and NDUFA4, which are encoded in the nuclear genome. The complex exists as a monomer or a dimer and forms supercomplexes (SCs) in the inner mitochondrial membrane with NADH-ubiquinone oxidoreductase (complex I, CI) and ubiquinol-cytochrome c oxidoreductase (cytochrome b-c1 complex, complex III, CIII), resulting in different assemblies (supercomplex SCI(1)III(2)IV(1) and megacomplex MCI(2)III(2)IV(2)). In terms of processing, in response to mitochondrial stress, the precursor protein is ubiquitinated by the SIFI complex in the cytoplasm before mitochondrial import, leading to its degradation. Within the SIFI complex, UBR4 initiates ubiquitin chain that are further elongated or branched by KCMF1.

It is found in the mitochondrion inner membrane. It functions in the pathway energy metabolism; oxidative phosphorylation. Functionally, component of the cytochrome c oxidase, the last enzyme in the mitochondrial electron transport chain which drives oxidative phosphorylation. The respiratory chain contains 3 multisubunit complexes succinate dehydrogenase (complex II, CII), ubiquinol-cytochrome c oxidoreductase (cytochrome b-c1 complex, complex III, CIII) and cytochrome c oxidase (complex IV, CIV), that cooperate to transfer electrons derived from NADH and succinate to molecular oxygen, creating an electrochemical gradient over the inner membrane that drives transmembrane transport and the ATP synthase. Cytochrome c oxidase is the component of the respiratory chain that catalyzes the reduction of oxygen to water. Electrons originating from reduced cytochrome c in the intermembrane space (IMS) are transferred via the dinuclear copper A center (CU(A)) of subunit 2 and heme A of subunit 1 to the active site in subunit 1, a binuclear center (BNC) formed by heme A3 and copper B (CU(B)). The BNC reduces molecular oxygen to 2 water molecules using 4 electrons from cytochrome c in the IMS and 4 protons from the mitochondrial matrix. In Nycticebus coucang (Slow loris), this protein is Cytochrome c oxidase subunit 8A, mitochondrial (COX8A).